The following is a 723-amino-acid chain: DNA-binding protein RFX2 (723 aa).

The tract at residues 1–46 (MQNSEGGADSPASVALRPSAAAPPVPASPQRVLVQAASSNPKGAQM) is disordered. The span at 10-20 (SPASVALRPSA) shows a compositional bias: low complexity. At Ser-28 the chain carries Phosphoserine. The RFX-type winged-helix DNA-binding region spans 199–274 (HLQWLLDNYE…YHYYGIRLKP (76 aa)). The interval 292–332 (QQPMHQKPRYRPAQKTDSLGDSGSHSGLHSTPEQTMAVQSQ) is disordered. A compositionally biased stretch (low complexity) spans 308-321 (DSLGDSGSHSGLHS). Residues 322-332 (TPEQTMAVQSQ) are compositionally biased toward polar residues. Ser-416 is modified (phosphoserine). The segment at 688–723 (MGDEQRGSEAGPDARSLGEPLVKRERSDPNHSLQGI) is disordered.

Belongs to the RFX family. Homodimer; probably only forms homodimers in testis. Heterodimer; heterodimerizes with RFX1 and RFX3.

It localises to the nucleus. It is found in the cytoplasm. Transcription factor that acts as a key regulator of spermatogenesis. Acts by regulating expression of genes required for the haploid phase during spermiogenesis, such as genes required for cilium assembly and function. Recognizes and binds the X-box, a regulatory motif with DNA sequence 5'-GTNRCC(0-3N)RGYAAC-3' present on promoters. Probably activates transcription of the testis-specific histone gene H1-6. This is DNA-binding protein RFX2 (RFX2) from Homo sapiens (Human).